Consider the following 188-residue polypeptide: MAAKLIVGLGNPGPKYSWTRHNAGFMVLDRLASISGIQVTRKAFSGLSGDGNWAAERVYLLKPQTFMNLSGRSVAEALRFYKLSLSDLIVIHDDLDIPFGKVKLKEGGGHGGHNGLRSLAQELGSSAYARIRVGIGRPVHGDVVNFVLANFAKEEMDSLLEVLDTSVDALEMMIKEGMPKAMSIFNAR.

A tRNA-binding site is contributed by Tyr16. Residue His21 is the Proton acceptor of the active site. TRNA contacts are provided by Phe66, Asn68, and Asn114.

It belongs to the PTH family. As to quaternary structure, monomer.

The protein resides in the cytoplasm. It carries out the reaction an N-acyl-L-alpha-aminoacyl-tRNA + H2O = an N-acyl-L-amino acid + a tRNA + H(+). Hydrolyzes ribosome-free peptidyl-tRNAs (with 1 or more amino acids incorporated), which drop off the ribosome during protein synthesis, or as a result of ribosome stalling. Functionally, catalyzes the release of premature peptidyl moieties from peptidyl-tRNA molecules trapped in stalled 50S ribosomal subunits, and thus maintains levels of free tRNAs and 50S ribosomes. The sequence is that of Peptidyl-tRNA hydrolase from Geobacter sp. (strain M21).